We begin with the raw amino-acid sequence, 786 residues long: E3 ubiquitin-protein ligase pub3 (786 aa).

The C2 domain occupies 1-109 (MEQGAKRVRF…RSNREVSLTR (109 aa)). Disordered regions lie at residues 134 to 225 (IRAP…NSNA) and 263 to 306 (TWTR…DSGN). A compositionally biased stretch (low complexity) spans 142–193 (SSTTANRTTSTPTTTTARTTRTTPRPTATTNTSNQSTSNSTRNGTSAATSNG). A compositionally biased stretch (polar residues) spans 204–213 (HRSSPVTNRQ). The span at 214–225 (TNNTSALSNSNA) shows a compositional bias: low complexity. In terms of domain architecture, WW 1 spans 236–269 (GRLPPGWERRADSLGRTYYVDHNTRTTTWTRPAS). Polar residues-rich tracts occupy residues 263 to 285 (TWTR…QRLN) and 295 to 305 (SNPSLMQSDSG). 2 consecutive WW domains span residues 306–339 (NDLP…DPRN) and 364–397 (GPLP…DPRL). The region spanning 453-786 (SAHDLKKRLM…VENTVGFGNE (334 aa)) is the HECT domain. Residue Cys754 is the Glycyl thioester intermediate of the active site.

The enzyme catalyses S-ubiquitinyl-[E2 ubiquitin-conjugating enzyme]-L-cysteine + [acceptor protein]-L-lysine = [E2 ubiquitin-conjugating enzyme]-L-cysteine + N(6)-ubiquitinyl-[acceptor protein]-L-lysine.. It functions in the pathway protein modification; protein ubiquitination. Functionally, E3 ubiquitin-protein ligase which accepts ubiquitin from an E2 ubiquitin-conjugating enzyme in the form of a thioester and then directly transfers the ubiquitin to targeted substrates. The sequence is that of E3 ubiquitin-protein ligase pub3 (pub3) from Schizosaccharomyces pombe (strain 972 / ATCC 24843) (Fission yeast).